A 70-amino-acid chain; its full sequence is Pyruvate-flavodoxin oxidoreductase (70 aa).

It belongs to the pyruvate:ferredoxin/flavodoxin oxidoreductase family.

The catalysed reaction is oxidized [flavodoxin] + pyruvate + CoA + 2 H(+) = reduced [flavodoxin] + acetyl-CoA + CO2. In terms of biological role, oxidoreductase required for the transfer of electrons from pyruvate to flavodoxin, which reduces nitrogenase. The chain is Pyruvate-flavodoxin oxidoreductase (nifJ) from Anabaena variabilis.